The chain runs to 156 residues: ATP synthase subunit b (156 aa).

Residues 7–29 (LFAQMVVFLVLAWFTMKFVWPPL) traverse the membrane as a helical segment.

This sequence belongs to the ATPase B chain family. As to quaternary structure, F-type ATPases have 2 components, F(1) - the catalytic core - and F(0) - the membrane proton channel. F(1) has five subunits: alpha(3), beta(3), gamma(1), delta(1), epsilon(1). F(0) has three main subunits: a(1), b(2) and c(10-14). The alpha and beta chains form an alternating ring which encloses part of the gamma chain. F(1) is attached to F(0) by a central stalk formed by the gamma and epsilon chains, while a peripheral stalk is formed by the delta and b chains.

The protein resides in the cell inner membrane. Functionally, f(1)F(0) ATP synthase produces ATP from ADP in the presence of a proton or sodium gradient. F-type ATPases consist of two structural domains, F(1) containing the extramembraneous catalytic core and F(0) containing the membrane proton channel, linked together by a central stalk and a peripheral stalk. During catalysis, ATP synthesis in the catalytic domain of F(1) is coupled via a rotary mechanism of the central stalk subunits to proton translocation. Its function is as follows. Component of the F(0) channel, it forms part of the peripheral stalk, linking F(1) to F(0). The protein is ATP synthase subunit b of Burkholderia lata (strain ATCC 17760 / DSM 23089 / LMG 22485 / NCIMB 9086 / R18194 / 383).